Here is a 391-residue protein sequence, read N- to C-terminus: NADH-quinone oxidoreductase subunit D (391 aa).

The protein belongs to the complex I 49 kDa subunit family. In terms of assembly, NDH-1 is composed of 14 different subunits. Subunits NuoB, C, D, E, F, and G constitute the peripheral sector of the complex.

The protein localises to the cell inner membrane. The catalysed reaction is a quinone + NADH + 5 H(+)(in) = a quinol + NAD(+) + 4 H(+)(out). NDH-1 shuttles electrons from NADH, via FMN and iron-sulfur (Fe-S) centers, to quinones in the respiratory chain. The immediate electron acceptor for the enzyme in this species is believed to be ubiquinone. Couples the redox reaction to proton translocation (for every two electrons transferred, four hydrogen ions are translocated across the cytoplasmic membrane), and thus conserves the redox energy in a proton gradient. This Rickettsia bellii (strain OSU 85-389) protein is NADH-quinone oxidoreductase subunit D.